An 880-amino-acid polypeptide reads, in one-letter code: DNA mismatch repair protein MutS (880 aa).

631-638 (GPNMAGKS) contributes to the ATP binding site. A disordered region spans residues 835 to 860 (RAAPPPPAPAAPKTSPVEERLREIQP). Basic and acidic residues predominate over residues 850–860 (PVEERLREIQP).

Belongs to the DNA mismatch repair MutS family.

This protein is involved in the repair of mismatches in DNA. It is possible that it carries out the mismatch recognition step. This protein has a weak ATPase activity. The chain is DNA mismatch repair protein MutS from Cereibacter sphaeroides (strain ATCC 17029 / ATH 2.4.9) (Rhodobacter sphaeroides).